The primary structure comprises 521 residues: Cytochrome P450 52A9 (521 aa).

Heme is bound at residue C468.

Belongs to the cytochrome P450 family. Heme serves as cofactor.

The protein localises to the membrane. Its function is as follows. Together with an NADPH cytochrome P450 the enzyme system catalyzes the terminal hydroxylation as the first step in the assimilation of alkanes and fatty acids. The polypeptide is Cytochrome P450 52A9 (CYP52A9) (Candida maltosa (Yeast)).